Consider the following 262-residue polypeptide: Type III pantothenate kinase (262 aa).

10–17 (DIGNTTTV) is an ATP binding site. 110–113 (GADR) lines the substrate pocket. Asp112 functions as the Proton acceptor in the catalytic mechanism. Asp134 contacts K(+). Thr137 lines the ATP pocket. Thr189 is a binding site for substrate.

The protein belongs to the type III pantothenate kinase family. As to quaternary structure, homodimer. NH4(+) serves as cofactor. The cofactor is K(+).

The protein resides in the cytoplasm. It carries out the reaction (R)-pantothenate + ATP = (R)-4'-phosphopantothenate + ADP + H(+). Its pathway is cofactor biosynthesis; coenzyme A biosynthesis; CoA from (R)-pantothenate: step 1/5. Catalyzes the phosphorylation of pantothenate (Pan), the first step in CoA biosynthesis. This chain is Type III pantothenate kinase, found in Deinococcus radiodurans (strain ATCC 13939 / DSM 20539 / JCM 16871 / CCUG 27074 / LMG 4051 / NBRC 15346 / NCIMB 9279 / VKM B-1422 / R1).